A 561-amino-acid chain; its full sequence is Probable xyloglucan galactosyltransferase GT20 (561 aa).

The Cytoplasmic portion of the chain corresponds to 1-31; sequence MVSKRKSRTSKTIEDSCIHLCSVFFRFLYYT. Residues 32–52 form a helical; Signal-anchor for type II membrane protein membrane-spanning segment; the sequence is LPALFLFFFLLYLCLSFTTGI. Topologically, residues 53–561 are lumenal; the sequence is SYNNFHMCIF…LLKKINRSVV (509 aa). 6 N-linked (GlcNAc...) asparagine glycosylation sites follow: Asn87, Asn253, Asn277, Asn418, Asn421, and Asn557.

It belongs to the glycosyltransferase 47 family. As to expression, expressed in hydathodes.

The protein localises to the golgi apparatus membrane. In terms of biological role, functions in xyloglucan synthesis by adding side chains to the xylosylated glucan backbone. Involved in the galactosylation of hemicellulose xyloglucan. The protein is Probable xyloglucan galactosyltransferase GT20 of Arabidopsis thaliana (Mouse-ear cress).